The primary structure comprises 92 residues: Putative pterin-4-alpha-carbinolamine dehydratase 2 (92 aa).

It belongs to the pterin-4-alpha-carbinolamine dehydratase family.

It catalyses the reaction (4aS,6R)-4a-hydroxy-L-erythro-5,6,7,8-tetrahydrobiopterin = (6R)-L-erythro-6,7-dihydrobiopterin + H2O. The polypeptide is Putative pterin-4-alpha-carbinolamine dehydratase 2 (Gloeobacter violaceus (strain ATCC 29082 / PCC 7421)).